Reading from the N-terminus, the 212-residue chain is uncharacterized protein (212 aa).

Positions 53, 74, and 97 each coordinate S-adenosyl-L-methionine.

Belongs to the methyltransferase superfamily. YrrT family.

Could be a S-adenosyl-L-methionine-dependent methyltransferase. This is an uncharacterized protein from Bacillus cereus (strain ZK / E33L).